The sequence spans 630 residues: A-type voltage-gated potassium channel KCND2 (630 aa).

Topologically, residues Met-1–Ala-184 are cytoplasmic. The tract at residues Ala-2–Met-20 is interaction with KCNIP1, KCNIP2, and other family members. Thr-38 carries the phosphothreonine modification. Residues Glu-71 to Asp-90 are interaction with KCNIP1. Zn(2+)-binding residues include His-105, Cys-111, Cys-132, and Cys-133. Residues Leu-185–Thr-206 traverse the membrane as a helical segment. The Extracellular portion of the chain corresponds to Val-207–Ala-226. Residues Val-227–Ala-249 traverse the membrane as a helical segment. Residues Ala-250 to Arg-256 lie on the Cytoplasmic side of the membrane. Residues Phe-257–Asp-281 traverse the membrane as a helical segment. The Extracellular portion of the chain corresponds to Asn-282–Gly-287. The helical; Voltage-sensor transmembrane segment at Ala-288–Ser-307 threads the bilayer. Residues Gln-308 to Ala-321 are Cytoplasmic-facing. The interval Gln-308–Ala-321 is S4-S5 linker. The chain crosses the membrane as a helical span at residues Ser-322 to Ala-345. At Glu-346–Ile-357 the chain is on the extracellular side. Residues Pro-358–Thr-369 constitute an intramembrane region (helical). Thr-370, Leu-371, Gly-372, and Tyr-373 together coordinate K(+). The short motif at Thr-370–Asp-375 is the Selectivity filter element. An intramembrane segment occupies Thr-370–Val-377. Topologically, residues Pro-378–Thr-380 are extracellular. A helical transmembrane segment spans residues Ile-381–Pro-403. At Val-404–Leu-630 the chain is on the cytoplasmic side. The tract at residues Phe-474 to Thr-489 is required for dendritic targeting. Residues Phe-474–Leu-630 are important for normal channel activation and inactivation, for interaction with KCNIP2, and probably other family members as well. 4 positions are modified to phosphoserine: Ser-548, Ser-552, Ser-572, and Ser-575. The segment at Ile-600 to Gly-622 is disordered. 2 positions are modified to phosphothreonine: Thr-602 and Thr-607. Ser-616 bears the Phosphoserine mark. The PDZ-binding signature appears at Val-627–Leu-630.

This sequence belongs to the potassium channel family. D (Shal) (TC 1.A.1.2) subfamily. Kv4.2/KCND2 sub-subfamily. Homotetramer or heterotetramer with KCND1 or KCND3. Associates with the regulatory subunits KCNIP2, KCNIP3 and KCNIP4. Interacts with the regulatory subunit KCNIP1; this interaction mediates the capture of both the N- and C-terminus of KCND2, preventing N-type inactivation and stabilizing the S6 conformation, thereby accelerating closed state inactivation and recovery. In vivo, probably exists as heteromeric complex containing variable proportions of KCND1, KCND2, KCND3, KCNIP1, KCNIP2, KCNIP3, KCNIP4, DPP6 and DPP10. The tetrameric channel can associate with up to four regulatory subunits, such as KCNIP2 or KCNIP4. Interaction with four KCNIP4 chains does not reduce interaction with DPP10. Interacts with DLG4 and NCS1/FREQ. Interacts with DLG1. Probably part of a complex consisting of KCNIP1, KCNIP2 isoform 3 and KCND2. Interacts with FLNA, FLNC and DPP10. Identified in a complex with cAMP-dependent protein kinase (PKA), CAV3, AKAP6 and KCND3 in cardiac myocytes. Interacts (via S1 and S2 helices) with DPP6; this interaction stabilizes the conformation of the S1-S2 helices and facilitates S4 conformational change, including S4 sliding up and down, thereby accelerating activation, inactivation, and recovery. In terms of processing, phosphorylation in response to MAPK activation is increased in stimulated dendrites. Interaction with KCNIP2 and DPP6 propomtes phosphorylation by PKA at Ser-552. Phosphorylation at Ser-552 has no effect on interaction with KCNIP3, but is required for the regulation of channel activity by KCNIP3. Phosphorylation at Ser-552 leads to KCND2 internalization. Phosphorylated by MAPK in response to signaling via the metabotropic glutamate receptor GRM5. Phosphorylation at Ser-616 is required for the down-regulation of neuronal A-type currents in response to signaling via GRM5.

It localises to the cell membrane. Its subcellular location is the cell projection. It is found in the dendrite. The protein resides in the synapse. The protein localises to the perikaryon. It localises to the postsynaptic cell membrane. Its subcellular location is the dendritic spine. It is found in the sarcolemma. The protein resides in the cell junction. The protein localises to the membrane. It localises to the caveola. It carries out the reaction K(+)(in) = K(+)(out). Functionally, voltage-gated potassium channel that mediates transmembrane potassium transport in excitable membranes, primarily in the brain, but also in rodent heart. Mediates the major part of the dendritic A-type current I(SA) in brain neurons. This current is activated at membrane potentials that are below the threshold for action potentials. It regulates neuronal excitability, prolongs the latency before the first spike in a series of action potentials, regulates the frequency of repetitive action potential firing, shortens the duration of action potentials and regulates the back-propagation of action potentials from the neuronal cell body to the dendrites. Contributes to the regulation of the circadian rhythm of action potential firing in suprachiasmatic nucleus neurons, which regulates the circadian rhythm of locomotor activity. Functions downstream of the metabotropic glutamate receptor GRM5 and plays a role in neuronal excitability and in nociception mediated by activation of GRM5. Mediates the transient outward current I(to) in rodent heart left ventricle apex cells, but not in human heart, where this current is mediated by another family member. Forms tetrameric potassium-selective channels through which potassium ions pass in accordance with their electrochemical gradient. The channel alternates between opened and closed conformations in response to the voltage difference across the membrane. Can form functional homotetrameric channels and heterotetrameric channels that contain variable proportions of KCND2 and KCND3; channel properties depend on the type of pore-forming alpha subunits that are part of the channel. In vivo, membranes probably contain a mixture of heteromeric potassium channel complexes. Interaction with specific isoforms of the regulatory subunits KCNIP1, KCNIP2, KCNIP3 or KCNIP4 strongly increases expression at the cell surface and thereby increases channel activity; it modulates the kinetics of channel activation and inactivation, shifts the threshold for channel activation to more negative voltage values, shifts the threshold for inactivation to less negative voltages and accelerates recovery after inactivation. Likewise, interaction with DPP6 or DPP10 promotes expression at the cell membrane and regulates both channel characteristics and activity. Upon depolarization, the channel goes from a resting closed state (C state) to an activated but non-conducting state (C* state), from there, the channel may either inactivate (I state) or open (O state). The sequence is that of A-type voltage-gated potassium channel KCND2 from Mustela putorius furo (European domestic ferret).